The chain runs to 388 residues: Succinate--CoA ligase [ADP-forming] subunit beta (388 aa).

An ATP-grasp domain is found at 9 to 244 (KQLFAEYGLP…PSQDDPREAH (236 aa)). ATP-binding positions include lysine 46, 53-55 (GRG), glutamate 99, threonine 102, and glutamate 107. Positions 199 and 213 each coordinate Mg(2+). Substrate-binding positions include asparagine 264 and 321–323 (GIV).

It belongs to the succinate/malate CoA ligase beta subunit family. Heterotetramer of two alpha and two beta subunits. It depends on Mg(2+) as a cofactor.

It carries out the reaction succinate + ATP + CoA = succinyl-CoA + ADP + phosphate. It catalyses the reaction GTP + succinate + CoA = succinyl-CoA + GDP + phosphate. It functions in the pathway carbohydrate metabolism; tricarboxylic acid cycle; succinate from succinyl-CoA (ligase route): step 1/1. Succinyl-CoA synthetase functions in the citric acid cycle (TCA), coupling the hydrolysis of succinyl-CoA to the synthesis of either ATP or GTP and thus represents the only step of substrate-level phosphorylation in the TCA. The beta subunit provides nucleotide specificity of the enzyme and binds the substrate succinate, while the binding sites for coenzyme A and phosphate are found in the alpha subunit. This is Succinate--CoA ligase [ADP-forming] subunit beta from Pseudomonas fluorescens (strain ATCC BAA-477 / NRRL B-23932 / Pf-5).